Reading from the N-terminus, the 837-residue chain is Katanin p80 WD40 repeat-containing subunit B1 homolog KTN80.4 (837 aa).

WD repeat units lie at residues 14–54 (AHSA…AILS), 57–96 (GHSS…IVRT), 99–138 (GHRS…CIHT), 141–182 (GHTR…TEFK), 184–222 (HEGQ…LIGS), 225–265 (PETA…DGVD), and 267–304 (GWSR…TEPC). Residues 115-131 (FFASGSLDTNLKIWDIR) carry the DWD box motif. Disordered stretches follow at residues 307–328 (GDTA…DPVV), 358–462 (GRLS…ANPV), and 501–614 (LQAA…LVIN). 2 stretches are compositionally biased toward polar residues: residues 376–387 (IGRSSTSQNSES) and 412–450 (TFSS…TSRR). Residues 509–520 (SPSSRNNPDLPD) are compositionally biased toward low complexity. Composition is skewed to basic and acidic residues over residues 553–563 (ATERSINDFRY) and 580–595 (RNHD…RSNR).

This sequence belongs to the WD repeat KATNB1 family. As to quaternary structure, component of KTN80-KTN1 complexes composed of a hexamer of KTN1-KTN80 heterodimers that sense microtubule (MT) geometry to confer precise MT severing. Interacts directly with AAA1/KTN1, and weakly with KTN80.1 and KTN80.3. As to expression, expressed in siliques, flowers, leaves, stems and roots.

The protein resides in the cytoplasm. It localises to the cytoskeleton. Functionally, may participate in a complex which severs microtubules in an ATP-dependent manner. This activity may promote rapid reorganization of cellular microtubule arrays. Confers precision to microtubule (MT) severing by specific targeting of KTN1 to MT cleavage sites such as crossover or branching nucleation sites. Together with other KTN80s, regulates cell elongation by modulating MT organization. The sequence is that of Katanin p80 WD40 repeat-containing subunit B1 homolog KTN80.4 from Arabidopsis thaliana (Mouse-ear cress).